The chain runs to 177 residues: Large ribosomal subunit protein uL6 (177 aa).

The protein belongs to the universal ribosomal protein uL6 family. Part of the 50S ribosomal subunit.

Its function is as follows. This protein binds to the 23S rRNA, and is important in its secondary structure. It is located near the subunit interface in the base of the L7/L12 stalk, and near the tRNA binding site of the peptidyltransferase center. In Cereibacter sphaeroides (strain ATCC 17025 / ATH 2.4.3) (Rhodobacter sphaeroides), this protein is Large ribosomal subunit protein uL6.